Here is a 76-residue protein sequence, read N- to C-terminus: Large ribosomal subunit protein bL31 (76 aa).

Residues cysteine 16, cysteine 18, cysteine 36, and cysteine 39 each contribute to the Zn(2+) site.

Belongs to the bacterial ribosomal protein bL31 family. Type A subfamily. In terms of assembly, part of the 50S ribosomal subunit. The cofactor is Zn(2+).

Functionally, binds the 23S rRNA. This is Large ribosomal subunit protein bL31 from Syntrophobacter fumaroxidans (strain DSM 10017 / MPOB).